Consider the following 533-residue polypeptide: Protein mono-ADP-ribosyltransferase PARP3 (533 aa).

The interval 1–30 is disordered; it reads MAPKRKASVQTEGSKKRRQGTEEEDSFRST. Lysine 6 carries the post-translational modification N6-(ADP-ribosyl)lysine. Glutamate 12 is modified (ADP-ribosyl glutamic acid). A Nuclear localization signal motif is present at residues 14–18; the sequence is SKKRR. 2 positions are modified to ADP-ribosyl glutamic acid: glutamate 24 and glutamate 32. The WGR domain maps to 57-147; sequence GIQVHEDYDC…DRFVAQPNKY (91 aa). Aspartate 138 carries the ADP-ribosyl aspartic acid modification. Residues glutamate 160, glutamate 230, glutamate 309, and glutamate 310 each carry the ADP-ribosyl glutamic acid modification. In terms of domain architecture, PARP alpha-helical spans 181 to 299; sequence PCSLDPATQN…DIELAQTLQA (119 aa). The region spanning 313-533 is the PARP catalytic domain; the sequence is HPLDRDYQLL…RLRYLLEIHL (221 aa).

It belongs to the ARTD/PARP family. As to quaternary structure, interacts with PARP1; leading to activate PARP1 in absence of DNA. Interacts with PRKDC. Interacts with XRCC5/Ku80; the interaction is dependent on nucleic acids. Interacts with XRCC6/Ku70; the interaction is dependent on nucleic acids. Interacts with EZH2, HDAC1, HDAC2, SUZ12, YY1, LRIG3 and LIG4. Auto-ADP-ribosylated.

Its subcellular location is the nucleus. It is found in the chromosome. It localises to the cytoplasm. The protein localises to the cytoskeleton. The protein resides in the microtubule organizing center. Its subcellular location is the centrosome. It is found in the centriole. It catalyses the reaction L-aspartyl-[protein] + NAD(+) = 4-O-(ADP-D-ribosyl)-L-aspartyl-[protein] + nicotinamide. The enzyme catalyses L-glutamyl-[protein] + NAD(+) = 5-O-(ADP-D-ribosyl)-L-glutamyl-[protein] + nicotinamide. The catalysed reaction is L-lysyl-[protein] + NAD(+) = N(6)-(ADP-D-ribosyl)-L-lysyl-[protein] + nicotinamide + H(+). In terms of biological role, mono-ADP-ribosyltransferase that mediates mono-ADP-ribosylation of target proteins and plays a key role in the response to DNA damage. Mediates mono-ADP-ribosylation of glutamate, aspartate or lysine residues on target proteins. In contrast to PARP1 and PARP2, it is not able to mediate poly-ADP-ribosylation. Involved in DNA repair by mediating mono-ADP-ribosylation of a limited number of acceptor proteins involved in chromatin architecture and in DNA metabolism, such as histone H2B, XRCC5 and XRCC6. ADP-ribosylation follows DNA damage and appears as an obligatory step in a detection/signaling pathway leading to the reparation of DNA strand breaks. Involved in single-strand break repair by catalyzing mono-ADP-ribosylation of histone H2B on 'Glu-2' (H2BE2ADPr) of nucleosomes containing nicked DNA. Cooperates with the XRCC5-XRCC6 (Ku80-Ku70) heterodimer to limit end-resection thereby promoting accurate NHEJ. Suppresses G-quadruplex (G4) structures in response to DNA damage. Associates with a number of DNA repair factors and is involved in the response to exogenous and endogenous DNA strand breaks. Together with APLF, promotes the retention of the LIG4-XRCC4 complex on chromatin and accelerate DNA ligation during non-homologous end-joining (NHEJ). May link the DNA damage surveillance network to the mitotic fidelity checkpoint. Acts as a negative regulator of immunoglobulin class switch recombination, probably by controlling the level of AICDA /AID on the chromatin. In addition to proteins, also able to ADP-ribosylate DNA: mediates DNA mono-ADP-ribosylation of DNA strand break termini via covalent addition of a single ADP-ribose moiety to a 5'- or 3'-terminal phosphate residues in DNA containing multiple strand breaks. The polypeptide is Protein mono-ADP-ribosyltransferase PARP3 (Mus musculus (Mouse)).